The chain runs to 315 residues: Leucine-rich repeat-containing protein 75B (315 aa).

The segment at 1–23 (MGARLGRRAGPEAGSEAGAAAGC) is disordered. Residues 11–23 (PEAGSEAGAAAGC) show a composition bias toward low complexity. LRR repeat units follow at residues 182–195 (LAVL…LSDE) and 207–220 (LPRL…GNRL). The tract at residues 284 to 315 (PEGSAAGATTPASTWDSTAAGLGPEPQACCAR) is disordered. The span at 286–297 (GSAAGATTPAST) shows a compositional bias: low complexity.

It belongs to the LRRC75 family.

Functionally, may suppress myogenic differentiation by modulating MYOG expression and Erk1/2 signaling. The chain is Leucine-rich repeat-containing protein 75B from Homo sapiens (Human).